The primary structure comprises 474 residues: Bifunctional protein HldE (474 aa).

Positions Met-1–Glu-321 are ribokinase. An ATP-binding site is contributed by Asn-198 to Glu-201. Residue Asp-266 is part of the active site. A cytidylyltransferase region spans residues Phe-348–Ser-474.

It in the N-terminal section; belongs to the carbohydrate kinase PfkB family. The protein in the C-terminal section; belongs to the cytidylyltransferase family. Homodimer.

The enzyme catalyses D-glycero-beta-D-manno-heptose 7-phosphate + ATP = D-glycero-beta-D-manno-heptose 1,7-bisphosphate + ADP + H(+). It carries out the reaction D-glycero-beta-D-manno-heptose 1-phosphate + ATP + H(+) = ADP-D-glycero-beta-D-manno-heptose + diphosphate. The protein operates within nucleotide-sugar biosynthesis; ADP-L-glycero-beta-D-manno-heptose biosynthesis; ADP-L-glycero-beta-D-manno-heptose from D-glycero-beta-D-manno-heptose 7-phosphate: step 1/4. It functions in the pathway nucleotide-sugar biosynthesis; ADP-L-glycero-beta-D-manno-heptose biosynthesis; ADP-L-glycero-beta-D-manno-heptose from D-glycero-beta-D-manno-heptose 7-phosphate: step 3/4. Its function is as follows. Catalyzes the phosphorylation of D-glycero-D-manno-heptose 7-phosphate at the C-1 position to selectively form D-glycero-beta-D-manno-heptose-1,7-bisphosphate. In terms of biological role, catalyzes the ADP transfer from ATP to D-glycero-beta-D-manno-heptose 1-phosphate, yielding ADP-D-glycero-beta-D-manno-heptose. The protein is Bifunctional protein HldE of Wolinella succinogenes (strain ATCC 29543 / DSM 1740 / CCUG 13145 / JCM 31913 / LMG 7466 / NCTC 11488 / FDC 602W) (Vibrio succinogenes).